We begin with the raw amino-acid sequence, 268 residues long: Putative ABC transporter ATP-binding protein MK0182 (268 aa).

The ABC transporter domain maps to 1–229 (MTHEYPDGTC…VDLIRESGLK (229 aa)). ATP is bound at residue 29–36 (GPNGSGKT).

This sequence belongs to the ABC transporter superfamily.

It is found in the cell membrane. Probably part of an ABC transporter complex. Responsible for energy coupling to the transport system. This is Putative ABC transporter ATP-binding protein MK0182 from Methanopyrus kandleri (strain AV19 / DSM 6324 / JCM 9639 / NBRC 100938).